We begin with the raw amino-acid sequence, 356 residues long: Tyrosine recombinase XerS (356 aa).

The Core-binding (CB) domain occupies 16 to 121 (IMPWYVLDYY…ALSSLYKYLT (106 aa)). Residues 169–354 (AFLDYVDKEY…VNDEQKNALD (186 aa)) enclose the Tyr recombinase domain. Residues Arg-210, Lys-234, His-306, Arg-309, and His-332 contribute to the active site. The active-site O-(3'-phospho-DNA)-tyrosine intermediate is the Tyr-341.

This sequence belongs to the 'phage' integrase family. XerS subfamily.

The protein localises to the cytoplasm. With respect to regulation, ftsK is required for recombination. In terms of biological role, site-specific tyrosine recombinase, which acts by catalyzing the cutting and rejoining of the recombining DNA molecules. Essential to convert dimers of the bacterial chromosome into monomers to permit their segregation at cell division. The sequence is that of Tyrosine recombinase XerS from Streptococcus equi subsp. zooepidemicus (strain MGCS10565).